Here is a 576-residue protein sequence, read N- to C-terminus: Proline--tRNA ligase (576 aa).

It belongs to the class-II aminoacyl-tRNA synthetase family. ProS type 1 subfamily. As to quaternary structure, homodimer.

The protein localises to the cytoplasm. The catalysed reaction is tRNA(Pro) + L-proline + ATP = L-prolyl-tRNA(Pro) + AMP + diphosphate. Its function is as follows. Catalyzes the attachment of proline to tRNA(Pro) in a two-step reaction: proline is first activated by ATP to form Pro-AMP and then transferred to the acceptor end of tRNA(Pro). As ProRS can inadvertently accommodate and process non-cognate amino acids such as alanine and cysteine, to avoid such errors it has two additional distinct editing activities against alanine. One activity is designated as 'pretransfer' editing and involves the tRNA(Pro)-independent hydrolysis of activated Ala-AMP. The other activity is designated 'posttransfer' editing and involves deacylation of mischarged Ala-tRNA(Pro). The misacylated Cys-tRNA(Pro) is not edited by ProRS. In Leptospira borgpetersenii serovar Hardjo-bovis (strain JB197), this protein is Proline--tRNA ligase.